The chain runs to 600 residues: Putative fucosyltransferase R654 (600 aa).

This sequence belongs to the glycosyltransferase 10 family.

This Acanthamoeba polyphaga mimivirus (APMV) protein is Putative fucosyltransferase R654.